The chain runs to 365 residues: Mannose-1-phosphate guanylyltransferase catalytic subunit beta (365 aa).

The interval 2–221 is substrate-binding domain; sequence KALILVGGYG…PGFWMDVGQP (220 aa). D109 serves as a coordination point for GDP-alpha-D-mannose. Mg(2+) is bound at residue D109. Residue K161 is part of the active site. Residue D217 participates in GDP-alpha-D-mannose binding. D217 contributes to the Mg(2+) binding site. A hexapeptide repeat domain region spans residues 244–365; sequence ETGSNIHPTA…VNVPSKDIIM (122 aa).

It belongs to the transferase hexapeptide repeat family. As to quaternary structure, component of the GMPPA-GMPPB mannose-1-phosphate guanylyltransferase complex composed of 4 GMPPA subunits and 8 tag-335/GMPPB subunits; the complex is organized into three layers, a central layer made up of 2 GMPPA dimers sandwiched between two layers each made up of 2 tag-335/GMPPB dimers. Catalytic activity of tag-335/GMPPB is reduced when part of the complex and binding of GDP-alpha-D-Mannose by GMPPA induces allosteric feedback inhibition of tag-335/GMPPB. It depends on Mg(2+) as a cofactor.

The enzyme catalyses alpha-D-mannose 1-phosphate + GTP + H(+) = GDP-alpha-D-mannose + diphosphate. Its pathway is nucleotide-sugar biosynthesis; GDP-alpha-D-mannose biosynthesis; GDP-alpha-D-mannose from alpha-D-mannose 1-phosphate (GTP route): step 1/1. With respect to regulation, enzyme activity is reduced by incorporation into the GMPPA-GMPPB mannose-1-phosphate guanylyltransferase complex. Allosterically inhibited, when part of the GMPPA-GMPPB complex, by GDP-alpha-D-mannose binding to GMPPA. Its function is as follows. Catalytic subunit of the GMPPA-GMPPB mannose-1-phosphate guanylyltransferase complex. Catalyzes the formation of GDP-mannose, an essential precursor of glycan moieties of glycoproteins and glycolipids. Can catalyze the reverse reaction in vitro. Together with GMPPA regulates GDP-alpha-D-mannose levels. This is Mannose-1-phosphate guanylyltransferase catalytic subunit beta (tag-335) from Caenorhabditis elegans.